A 255-amino-acid polypeptide reads, in one-letter code: Increased copper sensitivity protein 2 (255 aa).

A compositionally biased stretch (basic and acidic residues) spans 1-12 (MGKFEQKERERI). Disordered regions lie at residues 1–32 (MGKF…KSLG) and 82–142 (PGDK…RKSH). Residues 13–30 (STFSFPTTGSQSSTSIKS) show a composition bias toward polar residues. Over residues 131-142 (SGRRKSYHRKSH) the composition is skewed to basic residues. Phosphoserine is present on Ser-217.

This is Increased copper sensitivity protein 2 (ICS2) from Saccharomyces cerevisiae (strain ATCC 204508 / S288c) (Baker's yeast).